Here is a 302-residue protein sequence, read N- to C-terminus: Tegument protein VP22 (302 aa).

Positions 1-10 are enriched in basic and acidic residues; it reads MASSDGDRLC. Disordered regions lie at residues 1–42 and 125–167; these read MASS…PDDS and SFTK…TATS. Residues 154–244 are interaction with gE; the sequence is RPISFSTAPK…ANEADLGEGA (91 aa). Polar residues predominate over residues 157 to 167; the sequence is SFSTAPKTATS. The Nuclear export signal signature appears at 212-224; that stretch reads LDRLLTGAVIRIT. The interval 243–302 is disordered; sequence GASVSKRGHNRKTGDLQGGMGNEPMYAQVRKPKSRTDTQTTGRITNRSRARSASRTDARK.

This sequence belongs to the alphaherpesvirinae VP22 tegument protein family. As to quaternary structure, interacts with gE (via C-terminus); this interaction is necessary for the recruitment of VP22/ORF9 to the Golgi and its packaging into virions. Interacts with gM (via C-terminus). Interacts with VP16/ORF10; this interaction allows the formation of a tripartite complex composed of VP16/ORF10, VP22/ORF9 and VHS/ORF17. Interacts with the capsid-binding protein ORF44. Interacts with host CGAS. Highly phosphorylated in the host cell. Packaging is selective for underphosphorylated forms.

It localises to the virion tegument. The protein localises to the host cytoplasm. It is found in the host nucleus. The protein resides in the host Golgi apparatus. Functionally, tegument protein that plays different roles during the time course of infection. Participates in both the accumulation of viral mRNAs and viral protein translation at late time of infection. Modulates the RNase activity of the virion host shutoff protein ORF17 probably to ensure necessary levels of key cellular mRNAs and proteins. Plays a role in microtubule reorganization that occurs after viral infection by stabilizing microtubule network. Plays a role in the inhibition of host innate immune system by targeting the CGAS enzymatic activity which is the principal cytosolic DNA sensor that detects invading viral DNA. Acts by mediating disruption of liquid-like droplets in which CGAS is activated, thereby preventing CGAS activity. The chain is Tegument protein VP22 from Varicella-zoster virus (strain Oka vaccine) (HHV-3).